Reading from the N-terminus, the 347-residue chain is Protein RecA (347 aa).

67 to 74 (GPESSGKT) is an ATP binding site.

The protein belongs to the RecA family.

Its subcellular location is the cytoplasm. Can catalyze the hydrolysis of ATP in the presence of single-stranded DNA, the ATP-dependent uptake of single-stranded DNA by duplex DNA, and the ATP-dependent hybridization of homologous single-stranded DNAs. It interacts with LexA causing its activation and leading to its autocatalytic cleavage. This is Protein RecA from Helicobacter acinonychis (strain Sheeba).